Reading from the N-terminus, the 130-residue chain is MSGRGKQGGKARAKAKTRSSRAGLQFPVGRVHRLLRKGNYSERVGAGAPVYLAAVLEYLTAEILELAGNAARDNKKTRIIPRHLQLAIRNDEELNKLLGKVTIAQGGVLPNIQAVLLPKKTESHHKAKGK.

Residues 1–22 (MSGRGKQGGKARAKAKTRSSRA) are disordered. Serine 2 is modified (N-acetylserine). The residue at position 2 (serine 2) is a Phosphoserine; by RPS6KA5. Residue arginine 4 is modified to Citrulline; alternate. Arginine 4 is modified (symmetric dimethylarginine; by PRMT5; alternate). N6-(2-hydroxyisobutyryl)lysine; alternate is present on residues lysine 6 and lysine 10. Position 6 is an N6-acetyllysine; alternate (lysine 6). Residues 7–19 (QGGKARAKAKTRS) show a composition bias toward basic residues. Residues lysine 10 and lysine 14 each carry the N6-(beta-hydroxybutyryl)lysine; alternate modification. Position 10 is an N6-lactoyllysine; alternate (lysine 10). Residue lysine 10 is modified to N6-succinyllysine; alternate. A Glycyl lysine isopeptide (Lys-Gly) (interchain with G-Cter in ubiquitin); alternate cross-link involves residue lysine 14. A Glycyl lysine isopeptide (Lys-Gly) (interchain with G-Cter in ubiquitin) cross-link involves residue lysine 16. Lysine 37 bears the N6-(2-hydroxyisobutyryl)lysine; alternate mark. The residue at position 37 (lysine 37) is an N6-(beta-hydroxybutyryl)lysine; alternate. Lysine 37 carries the post-translational modification N6-crotonyllysine; alternate. An N6-(2-hydroxyisobutyryl)lysine mark is found at lysine 75 and lysine 76. N6-(2-hydroxyisobutyryl)lysine; alternate is present on lysine 96. Lysine 96 carries the N6-(beta-hydroxybutyryl)lysine; alternate modification. Position 96 is an N6-succinyllysine; alternate (lysine 96). At lysine 96 the chain carries N6-glutaryllysine; alternate. Position 100 is an N6-glutaryllysine (lysine 100). Glutamine 105 is subject to N5-methylglutamine. At lysine 119 the chain carries N6-(2-hydroxyisobutyryl)lysine; alternate. Lysine 119 carries the post-translational modification N6-(beta-hydroxybutyryl)lysine; alternate. Lysine 119 and lysine 120 each carry N6-crotonyllysine; alternate. 2 positions are modified to N6-glutaryllysine; alternate: lysine 119 and lysine 120. Residue lysine 120 forms a Glycyl lysine isopeptide (Lys-Gly) (interchain with G-Cter in ubiquitin); alternate linkage. At threonine 121 the chain carries Phosphothreonine; by DCAF1. Lysine 126 bears the N6-crotonyllysine; alternate mark. The residue at position 126 (lysine 126) is an N6-glutaryllysine; alternate.

It belongs to the histone H2A family. In terms of assembly, the nucleosome is a histone octamer containing two molecules each of H2A, H2B, H3 and H4 assembled in one H3-H4 heterotetramer and two H2A-H2B heterodimers. The octamer wraps approximately 147 bp of DNA. Deiminated on Arg-4 in granulocytes upon calcium entry. Post-translationally, monoubiquitination of Lys-120 (H2AK119Ub) by RING1, TRIM37 and RNF2/RING2 complex gives a specific tag for epigenetic transcriptional repression and participates in X chromosome inactivation of female mammals. It is involved in the initiation of both imprinted and random X inactivation. Ubiquitinated H2A is enriched in inactive X chromosome chromatin. Ubiquitination of H2A functions downstream of methylation of 'Lys-27' of histone H3 (H3K27me). H2AK119Ub by RNF2/RING2 can also be induced by ultraviolet and may be involved in DNA repair. Monoubiquitination of Lys-120 (H2AK119Ub) by TRIM37 may promote transformation of cells in a number of breast cancers. Following DNA double-strand breaks (DSBs), it is ubiquitinated through 'Lys-63' linkage of ubiquitin moieties by the E2 ligase UBE2N and the E3 ligases RNF8 and RNF168, leading to the recruitment of repair proteins to sites of DNA damage. Ubiquitination at Lys-14 and Lys-16 (H2AK13Ub and H2AK15Ub, respectively) in response to DNA damage is initiated by RNF168 that mediates monoubiquitination at these 2 sites, and 'Lys-63'-linked ubiquitin are then conjugated to monoubiquitin; RNF8 is able to extend 'Lys-63'-linked ubiquitin chains in vitro. Deubiquitinated by USP51 at Lys-14 and Lys-16 (H2AK13Ub and H2AK15Ub, respectively) after damaged DNA is repaired. H2AK119Ub and ionizing radiation-induced 'Lys-63'-linked ubiquitination (H2AK13Ub and H2AK15Ub) are distinct events. In terms of processing, phosphorylation on Ser-2 (H2AS1ph) is enhanced during mitosis. Phosphorylation on Ser-2 by RPS6KA5/MSK1 directly represses transcription. Acetylation of H3 inhibits Ser-2 phosphorylation by RPS6KA5/MSK1. Phosphorylation at Thr-121 (H2AT120ph) by DCAF1 is present in the regulatory region of many tumor suppresor genes and down-regulates their transcription. Glutamine methylation at Gln-105 (H2AQ104me) by FBL is specifically dedicated to polymerase I. It is present at 35S ribosomal DNA locus and impairs binding of the FACT complex. Post-translationally, symmetric dimethylation on Arg-4 by the PRDM1/PRMT5 complex may play a crucial role in the germ-cell lineage. In terms of processing, crotonylation (Kcr) is specifically present in male germ cells and marks testis-specific genes in post-meiotic cells, including X-linked genes that escape sex chromosome inactivation in haploid cells. Crotonylation marks active promoters and enhancers and confers resistance to transcriptional repressors. It is also associated with post-meiotically activated genes on autosomes. Lactylated in macrophages by EP300/P300 by using lactoyl-CoA directly derived from endogenous or exogenous lactate, leading to stimulates gene transcription.

The protein localises to the nucleus. Its subcellular location is the chromosome. Functionally, core component of nucleosome. Nucleosomes wrap and compact DNA into chromatin, limiting DNA accessibility to the cellular machineries which require DNA as a template. Histones thereby play a central role in transcription regulation, DNA repair, DNA replication and chromosomal stability. DNA accessibility is regulated via a complex set of post-translational modifications of histones, also called histone code, and nucleosome remodeling. The polypeptide is Histone H2A type 1-D (Homo sapiens (Human)).